Here is a 182-residue protein sequence, read N- to C-terminus: Translation initiation factor IF-3 (182 aa).

The protein belongs to the IF-3 family. Monomer.

The protein resides in the cytoplasm. IF-3 binds to the 30S ribosomal subunit and shifts the equilibrium between 70S ribosomes and their 50S and 30S subunits in favor of the free subunits, thus enhancing the availability of 30S subunits on which protein synthesis initiation begins. The protein is Translation initiation factor IF-3 of Tropheryma whipplei (strain TW08/27) (Whipple's bacillus).